A 584-amino-acid chain; its full sequence is NADPH-dependent diflavin oxidoreductase 1 (584 aa).

Residues 6 to 150 enclose the Flavodoxin-like domain; it reads IYILYGSETG…VFAYWCNHLY (145 aa). FMN-binding positions include 12–17, 59–62, 97–106, and Glu132; these read SETGTA, STTG, and CGDTSYTRFN. In terms of domain architecture, FAD-binding FR-type spans 199–436; the sequence is RGKIEATLVH…LPGFLNLSYQ (238 aa). Residues Arg343, 373-376, and 407-410 each bind FAD; these read RQYS and GICS. NADP(+) contacts are provided by residues Thr448, 503 to 504, and 509 to 513; these read SR and KKYVQ. Trp584 contributes to the FAD binding site.

It belongs to the NADPH-dependent diflavin oxidoreductase NDOR1 family. In the N-terminal section; belongs to the flavodoxin family. The protein in the C-terminal section; belongs to the flavoprotein pyridine nucleotide cytochrome reductase family. Interacts with dre2; as part of the cytosolic iron-sulfur (Fe-S) protein assembly (CIA) machinery. Requires FAD as cofactor. FMN is required as a cofactor.

The protein localises to the cytoplasm. Its subcellular location is the mitochondrion. The enzyme catalyses 2 oxidized [2Fe-2S]-[protein] + NADPH = 2 reduced [2Fe-2S]-[protein] + NADP(+) + H(+). NADPH-dependent reductase which is a central component of the cytosolic iron-sulfur (Fe-S) protein assembly (CIA) machinery. Transfers electrons from NADPH via its FAD and FMN prosthetic groups to the [2Fe-2S] cluster of dre2, another key component of the CIA machinery. In turn, this reduced cluster provides electrons for assembly of cytosolic iron-sulfur cluster proteins. Positively controls H(2)O(2)-induced cell death. The polypeptide is NADPH-dependent diflavin oxidoreductase 1 (Schizosaccharomyces pombe (strain 972 / ATCC 24843) (Fission yeast)).